The primary structure comprises 532 residues: Sodium-dependent lysophosphatidylcholine symporter 1-A (532 aa).

Over 1 to 40 the chain is Cytoplasmic; the sequence is MARGEGAEQFSSGLLPTAKSVTQNEIKMVKLPKQQERKRA. A helical membrane pass occupies residues 41–70; the sequence is LTVWSKVCFAIGGAPYQITGTALGFFLQIF. At 71-81 the chain is on the extracellular side; sequence LLDVAQLNPLN. Residues 82–102 form a helical membrane-spanning segment; sequence ASVILFVGRAWDAVTDPTVGF. Residues 103-114 are Cytoplasmic-facing; it reads LVSRTPWTRHGR. A helical membrane pass occupies residues 115–134; that stretch reads MMPWILVSTIPAVLCYFLIW. Topologically, residues 135–144 are extracellular; the sequence is VVPPIEQGKM. The chain crosses the membrane as a helical span at residues 145-169; that stretch reads MWYLLFYCLFQTLQTCFHVPYSALT. Residues 170–176 lie on the Cytoplasmic side of the membrane; sequence MFISTEQ. A helical transmembrane segment spans residues 177-208; the sequence is RERDSATAYRMTVEVFGTVVGTAIQGQIVGMA. Over 209–232 the chain is Extracellular; that stretch reads NTPCKNNTSPNNSSNDLIQSNNSH. Cysteines 212 and 464 form a disulfide. N-linked (GlcNAc...) asparagine glycosylation is found at asparagine 214, asparagine 220, and asparagine 229. A helical transmembrane segment spans residues 233–266; that stretch reads IPLKSNIFDERCAYMIASAVISLIYVVCAAVLFF. Residues 267 to 297 are Cytoplasmic-facing; that stretch reads GVREQDVQGELKAQKRVSFQKGLRLVMGHGP. Residues 298 to 324 form a helical membrane-spanning segment; that stretch reads YVKLVLAFLFTSLAFMLLEGNFAVFIK. Over 325–335 the chain is Extracellular; that stretch reads YTLGFREDFQN. The helical transmembrane segment at 336 to 354 threads the bilayer; it reads ILLVIMVSATVSIPMWQWF. Residues 355-358 lie on the Cytoplasmic side of the membrane; it reads LCRF. The helical transmembrane segment at 359 to 380 threads the bilayer; it reads GKKTAVYIGITWAVPFMILVVS. The Extracellular portion of the chain corresponds to 381–383; that stretch reads VNS. Residues 384-420 form a helical membrane-spanning segment; it reads SLIVSYIVSIAAGVSVGAAFLLPWSMLPDVVDDFKLQ. The Cytoplasmic portion of the chain corresponds to 421–430; sequence NPTSQGHEAI. A helical membrane pass occupies residues 431-457; that stretch reads FYSFYVFFTKFASGVSLGVSTLALSFA. Over 458 to 469 the chain is Extracellular; that stretch reads GYETGVCVQSDS. A helical transmembrane segment spans residues 470–493; that stretch reads VNLTLKLLVSAAPVSLIALGLLIF. Residues 494-532 lie on the Cytoplasmic side of the membrane; that stretch reads MTYPIDEERREYNNKQLQLLLRNEEEEDEMEVLKPDITA.

It belongs to the major facilitator superfamily. In terms of tissue distribution, expressed in the developing nervous system.

It localises to the cell membrane. It is found in the endoplasmic reticulum membrane. It carries out the reaction a 1-acyl-sn-glycero-3-phosphocholine(in) + Na(+)(in) = a 1-acyl-sn-glycero-3-phosphocholine(out) + Na(+)(out). It catalyses the reaction 1-(4Z,7Z,10Z,13Z,16Z,19Z-docosahexaenoyl)-sn-glycero-3-phosphocholine(in) + Na(+)(in) = 1-(4Z,7Z,10Z,13Z,16Z,19Z-docosahexaenoyl)-sn-glycero-3-phosphocholine(out) + Na(+)(out). The enzyme catalyses 1-(9Z-octadecenoyl)-sn-glycero-3-phosphocholine(in) + Na(+)(in) = 1-(9Z-octadecenoyl)-sn-glycero-3-phosphocholine(out) + Na(+)(out). The catalysed reaction is 1-hexadecanoyl-sn-glycero-3-phosphocholine(in) + Na(+)(in) = 1-hexadecanoyl-sn-glycero-3-phosphocholine(out) + Na(+)(out). It carries out the reaction a 1-acyl-sn-glycero-3-phosphoethanolamine(in) + Na(+)(in) = a 1-acyl-sn-glycero-3-phosphoethanolamine(out) + Na(+)(out). Functionally, sodium-dependent lysophosphatidylcholine (LPC) symporter, which plays an essential role for blood-brain barrier formation and function. Specifically expressed in endothelium of the blood-brain barrier of micro-vessels and transports LPC into the brain. Transport of LPC is essential because it constitutes the major mechanism by which docosahexaenoic acid (DHA), an omega-3 fatty acid that is essential for normal brain growth and cognitive function, enters the brain. Transports LPC carrying long-chain fatty acids such LPC oleate and LPC palmitate with a minimum acyl chain length of 14 carbons. Does not transport docosahexaenoic acid in unesterified fatty acid. The chain is Sodium-dependent lysophosphatidylcholine symporter 1-A (mfsd2aa) from Danio rerio (Zebrafish).